We begin with the raw amino-acid sequence, 357 residues long: Quinolinate synthase (357 aa).

2 residues coordinate iminosuccinate: H50 and S71. C116 serves as a coordination point for [4Fe-4S] cluster. Iminosuccinate contacts are provided by residues 142-144 and S159; that span reads YAN. C203 contributes to the [4Fe-4S] cluster binding site. Iminosuccinate is bound by residues 229 to 231 and T246; that span reads HPE. C300 provides a ligand contact to [4Fe-4S] cluster.

The protein belongs to the quinolinate synthase family. Type 1 subfamily. [4Fe-4S] cluster is required as a cofactor.

The protein localises to the cytoplasm. It catalyses the reaction iminosuccinate + dihydroxyacetone phosphate = quinolinate + phosphate + 2 H2O + H(+). The protein operates within cofactor biosynthesis; NAD(+) biosynthesis; quinolinate from iminoaspartate: step 1/1. Its function is as follows. Catalyzes the condensation of iminoaspartate with dihydroxyacetone phosphate to form quinolinate. The protein is Quinolinate synthase of Shewanella sp. (strain MR-4).